The following is a 157-amino-acid chain: uncharacterized protein (157 aa).

This sequence belongs to the MG067/MG068/MG395 family.

This is an uncharacterized protein from Mycoplasma pneumoniae (strain ATCC 29342 / M129 / Subtype 1) (Mycoplasmoides pneumoniae).